Reading from the N-terminus, the 520-residue chain is NAD(P)H-quinone oxidoreductase subunit 2 (520 aa).

The next 14 helical transmembrane spans lie at 15–35 (ILPE…DLIL), 42–62 (WIGY…YFQW), 79–99 (LSII…LMSI), 106–126 (GTAL…GMFV), 132–152 (LVMI…LTGY), 167–187 (LLIG…LYGL), 210–230 (LGAV…ISAA), 244–264 (PTPV…ALAI), 280–300 (FVFT…ALAQ), 306–326 (MLAY…IAGT), 334–354 (IFYL…IILF), 378–398 (LGLS…GFFG), 400–420 (IYLF…LGLV), and 466–486 (VGLV…NPLF).

This sequence belongs to the complex I subunit 2 family. NDH-1 can be composed of about 15 different subunits; different subcomplexes with different compositions have been identified which probably have different functions.

The protein localises to the cellular thylakoid membrane. The catalysed reaction is a plastoquinone + NADH + (n+1) H(+)(in) = a plastoquinol + NAD(+) + n H(+)(out). The enzyme catalyses a plastoquinone + NADPH + (n+1) H(+)(in) = a plastoquinol + NADP(+) + n H(+)(out). In terms of biological role, NDH-1 shuttles electrons from an unknown electron donor, via FMN and iron-sulfur (Fe-S) centers, to quinones in the respiratory and/or the photosynthetic chain. The immediate electron acceptor for the enzyme in this species is believed to be plastoquinone. Couples the redox reaction to proton translocation, and thus conserves the redox energy in a proton gradient. Cyanobacterial NDH-1 also plays a role in inorganic carbon-concentration. This Trichormus variabilis (strain ATCC 29413 / PCC 7937) (Anabaena variabilis) protein is NAD(P)H-quinone oxidoreductase subunit 2.